A 198-amino-acid chain; its full sequence is MSNSAVSYKPIVNIENIVATVTLEQSLDLYAMERSIPNIEYDPDQFPGLIFRLEQPKVTALIFKSGKMVVTGAKSTEELIKAVKRIIKTLKKYGIKIMGKPKIQIQNIVASANLHVNVNLDKAAFLLENNMYEPEQFPGLIFRMDDPRVVLLIFSSGKMVITGAKREDEVSKAVKRIFDKLAELDCVKPIEEEEELEL.

Tandem repeats lie at residues 14 to 90 and 105 to 181.

The protein belongs to the TBP family.

Functionally, general factor that plays a role in the activation of archaeal genes transcribed by RNA polymerase. Binds specifically to the TATA box promoter element which lies close to the position of transcription initiation. This chain is TATA-box-binding protein, found in Saccharolobus shibatae (strain ATCC 51178 / DSM 5389 / JCM 8931 / NBRC 15437 / B12) (Sulfolobus shibatae).